Reading from the N-terminus, the 425-residue chain is Serine--tRNA ligase (425 aa).

An L-serine-binding site is contributed by 233–235; sequence TAE. Position 264–266 (264–266) interacts with ATP; that stretch reads RAE. An L-serine-binding site is contributed by glutamate 287. ATP is bound at residue 351 to 354; the sequence is EISS. Residue serine 387 participates in L-serine binding.

It belongs to the class-II aminoacyl-tRNA synthetase family. Type-1 seryl-tRNA synthetase subfamily. Homodimer. The tRNA molecule binds across the dimer.

The protein resides in the cytoplasm. The catalysed reaction is tRNA(Ser) + L-serine + ATP = L-seryl-tRNA(Ser) + AMP + diphosphate + H(+). It carries out the reaction tRNA(Sec) + L-serine + ATP = L-seryl-tRNA(Sec) + AMP + diphosphate + H(+). It participates in aminoacyl-tRNA biosynthesis; selenocysteinyl-tRNA(Sec) biosynthesis; L-seryl-tRNA(Sec) from L-serine and tRNA(Sec): step 1/1. In terms of biological role, catalyzes the attachment of serine to tRNA(Ser). Is also able to aminoacylate tRNA(Sec) with serine, to form the misacylated tRNA L-seryl-tRNA(Sec), which will be further converted into selenocysteinyl-tRNA(Sec). The sequence is that of Serine--tRNA ligase from Clostridium perfringens (strain 13 / Type A).